Here is a 630-residue protein sequence, read N- to C-terminus: NUAK family SNF1-like kinase 2 (630 aa).

Met1 is modified (N-acetylmethionine). The region spanning 57 to 307 is the Protein kinase domain; the sequence is YEFLETLGKG…LEDVASHWWV (251 aa). ATP-binding positions include 63–71 and Lys85; that span reads LGKGTYGKV. Residue Asp179 is the Proton acceptor of the active site. Thr212 carries the post-translational modification Phosphothreonine. 2 disordered regions span residues 361–504 and 521–566; these read HVPG…RLHR and GTAP…LDLP. A compositionally biased stretch (low complexity) spans 464–476; the sequence is SGYYSSPEPSESG. A phosphoserine mark is found at Ser529, Ser550, Ser553, and Ser579.

The protein belongs to the protein kinase superfamily. CAMK Ser/Thr protein kinase family. SNF1 subfamily. Mg(2+) serves as cofactor. In terms of processing, phosphorylated at Thr-212 by STK11/LKB1 in complex with STE20-related adapter-alpha (STRADA) pseudo kinase and CAB39. Autophosphorylation is also possible at Thr-212. Expressed in liver, skin, testis, uterus, ovary, adrenal gland and brain (at protein level). Expressed in kidney, heart, skin, spleen, lung, uterus, liver and the exocrine and endocrine compartments of the human pancreas. A kinase-inactive isoform also appears to be expressed in the skin, spleen, lung, uterus, liver and testis.

The enzyme catalyses L-seryl-[protein] + ATP = O-phospho-L-seryl-[protein] + ADP + H(+). It carries out the reaction L-threonyl-[protein] + ATP = O-phospho-L-threonyl-[protein] + ADP + H(+). With respect to regulation, activated by phosphorylation on Thr-212 by STK11 in complex with STE20-related adapter-alpha (STRAD alpha) pseudo kinase and CAB39. Functionally, stress-activated kinase involved in tolerance to glucose starvation. Induces cell-cell detachment by increasing F-actin conversion to G-actin. Expression is induced by CD95 or TNF-alpha, via NF-kappa-B. Protects cells from CD95-mediated apoptosis and is required for the increased motility and invasiveness of CD95-activated tumor cells. Phosphorylates LATS1 and LATS2. Plays a key role in neural tube closure during embryonic development through LATS2 phosphorylation and regulation of the nuclear localization of YAP1 a critical downstream regulatory target in the Hippo signaling pathway. This is NUAK family SNF1-like kinase 2 from Rattus norvegicus (Rat).